Reading from the N-terminus, the 341-residue chain is NADH-ubiquinone oxidoreductase chain 1 (341 aa).

The next 10 membrane-spanning stretches (helical) occupy residues 2–22 (IINIVEILIFLVCVLFSVAYL), 39–59 (PNFVGYYGLLQAFADAVKLLL), 71–91 (IILVISPLITLITALIGWVVI), 104–124 (LGILFSLAIGSLGVFGSLLSG), 141–161 (AQLISYELILTSIFIIIIMFV), 175–195 (VVWYCIPLLPLLLIFFIASVA), 212–230 (VAGYFTEYSGSPFVFFFLA), 243–263 (GYLLLGGYLSFNYSYLFNILF), 276–296 (LINSSAYAIKLVFLMFSFIWV), and 308–328 (LINFCWIILLPLLFGIFLIIP).

The protein belongs to the complex I subunit 1 family. In terms of assembly, complex I is composed of 37 different subunits.

Its subcellular location is the mitochondrion inner membrane. It carries out the reaction a ubiquinone + NADH + 5 H(+)(in) = a ubiquinol + NAD(+) + 4 H(+)(out). In terms of biological role, core subunit of the mitochondrial membrane respiratory chain NADH dehydrogenase (Complex I) that is believed to belong to the minimal assembly required for catalysis. Complex I functions in the transfer of electrons from NADH to the respiratory chain. The immediate electron acceptor for the enzyme is believed to be ubiquinone. The protein is NADH-ubiquinone oxidoreductase chain 1 (ND1) of Yarrowia lipolytica (strain CLIB 122 / E 150) (Yeast).